Reading from the N-terminus, the 249-residue chain is Metallo-beta-lactamase type 2 (249 aa).

The first 22 residues, 1–22 (MLKKIKISLILALGLTSLQAFG), serve as a signal peptide directing secretion. The Zn(2+) site is built by His-98, His-100, Asp-102, His-161, and Cys-180. Residue Lys-183 participates in substrate binding. His-222 contributes to the Zn(2+) binding site.

It belongs to the metallo-beta-lactamase superfamily. Class-B beta-lactamase family. In terms of assembly, monomer. Requires Zn(2+) as cofactor.

The protein resides in the periplasm. It catalyses the reaction a beta-lactam + H2O = a substituted beta-amino acid. Inhibited by chelating agents such as EDTA, 1-10 phenanthroline and pyridine-2,6-dicarboxylic acid. Functionally, confers resistance to the different beta-lactams antibiotics (penicillin, cephalosporin and carbapenem) via the hydrolysis of the beta-lactam ring. This is Metallo-beta-lactamase type 2 (blaB1) from Elizabethkingia meningoseptica (Chryseobacterium meningosepticum).